Reading from the N-terminus, the 119-residue chain is Large ribosomal subunit protein bL20 (119 aa).

Belongs to the bacterial ribosomal protein bL20 family.

Its function is as follows. Binds directly to 23S ribosomal RNA and is necessary for the in vitro assembly process of the 50S ribosomal subunit. It is not involved in the protein synthesizing functions of that subunit. The chain is Large ribosomal subunit protein bL20 from Xylella fastidiosa (strain 9a5c).